The chain runs to 492 residues: Trehalose-6-phosphate synthase (492 aa).

Arg-25 provides a ligand contact to D-glucose 6-phosphate. 45–46 contributes to the UDP-alpha-D-glucose binding site; that stretch reads GG. Positions 101 and 155 each coordinate D-glucose 6-phosphate. Residues Arg-297 and Lys-302 each contribute to the UDP-alpha-D-glucose site. Arg-335 contacts D-glucose 6-phosphate. UDP-alpha-D-glucose is bound at residue 400 to 404; it reads LVAKE.

Belongs to the glycosyltransferase 20 family. Homotetramer.

The catalysed reaction is ADP-alpha-D-glucose + D-glucose 6-phosphate = alpha,alpha-trehalose 6-phosphate + ADP + H(+). It catalyses the reaction CDP-alpha-D-glucose + D-glucose 6-phosphate = alpha,alpha-trehalose 6-phosphate + CDP + H(+). It carries out the reaction GDP-alpha-D-glucose + D-glucose 6-phosphate = alpha,alpha-trehalose 6-phosphate + GDP + H(+). The enzyme catalyses TDP-alpha-D-glucose + D-glucose 6-phosphate = 5-methyl-UDP + alpha,alpha-trehalose 6-phosphate + H(+). The catalysed reaction is D-glucose 6-phosphate + UDP-alpha-D-glucose = alpha,alpha-trehalose 6-phosphate + UDP + H(+). Its pathway is glycan biosynthesis; trehalose biosynthesis. Probably involved in the osmoprotection via the biosynthesis of trehalose and in the production of glycogen and alpha-glucan via the TreS-Pep2 branch involved in the biosynthesis of maltose-1-phosphate (M1P). Catalyzes the transfer of glucose from UDP-glucose (UDP-Glc) to D-glucose 6-phosphate (Glc-6-P) to form trehalose-6-phosphate. Probably also able to use ADP-Glc, CDP-Glc, GDP-Glc and TDP-Glc as glucosyl donors. In Mycobacterium avium (strain 104), this protein is Trehalose-6-phosphate synthase.